A 47-amino-acid chain; its full sequence is Delta-actitoxin-Axm1d (47 aa).

3 disulfide bridges follow: cysteine 4–cysteine 44, cysteine 6–cysteine 34, and cysteine 27–cysteine 45.

Belongs to the sea anemone sodium channel inhibitory toxin family. Type I subfamily.

Its subcellular location is the secreted. The protein localises to the nematocyst. Functionally, binds specifically to voltage-gated sodium channels (Nav), thereby delaying their inactivation during signal transduction. Thus it strongly stimulates mammalian cardiac muscle contraction. The chain is Delta-actitoxin-Axm1d from Anthopleura xanthogrammica (Giant green sea anemone).